A 195-amino-acid chain; its full sequence is MASQKRPSQRHGSKYLATASTMDHARHGFLPRHRDTGILDSIGRFFSGDRGAPKRGSGKVPWLKQSRSPLPSHARSRPGLCHMYKDSHTRTTHYGSLPQKSQRTQDENPVVHFFKNIVTPRTPPPSQGKGRGLSLSRFSWGAEGQKPGFGYGGRASDYKSAHKGFKGAYDAQGTLSKIFKLGGRDSRSGSPMARR.

Residue Ala2 is modified to N-acetylalanine. Phosphoserine is present on residues Ser8 and Ser13. Tyr15 bears the Phosphotyrosine mark. Phosphothreonine is present on Thr18. A Phosphoserine modification is found at Ser20. Thr21 bears the Phosphothreonine mark. Arg26 and Arg32 each carry citrulline. Thr36 carries the phosphothreonine modification. Ser41 is modified (phosphoserine). Omega-N-methylarginine occurs at positions 44 and 50. The segment at 45–79 is disordered; sequence FFSGDRGAPKRGSGKVPWLKQSRSPLPSHARSRPG. Position 57 is a phosphoserine (Ser57). Phosphothreonine is present on Thr92. Tyr94 is modified (phosphotyrosine). Ser101 carries the post-translational modification Phosphoserine. 3 positions are modified to phosphothreonine: Thr104, Thr119, and Thr122. The interval 117 to 139 is disordered; the sequence is IVTPRTPPPSQGKGRGLSLSRFS. Gln127 is subject to Deamidated glutamine. Arg131 carries the omega-N-methylarginine; alternate modification. A Symmetric dimethylarginine; alternate modification is found at Arg131. Ser139 carries the post-translational modification Phosphoserine. Lys146 carries the N6-acetyllysine modification. Residue Arg154 is modified to Citrulline. At Gln172 the chain carries Deamidated glutamine. The residue at position 184 (Arg184) is a Citrulline. Ser186 carries the post-translational modification Phosphoserine. Ser190 bears the Phosphoserine; by UHMK1 mark. Residue Arg195 is modified to Citrulline.

It belongs to the myelin basic protein family. Homodimer. In terms of processing, as in other animals, several charge isomers may be produced as a result of optional post-translational modifications, such as phosphorylation of serine or threonine residues, deamidation of glutamine or asparagine residues, citrullination and methylation of arginine residues. Arg-131 was found to be 44% monomethylated and 11% symmetrically dimethylated. Post-translationally, phosphorylated by TAOK2, VRK2, MAPK11, MAPK12, MAPK14 and MINK1. In terms of processing, proteolytically cleaved in B cell lysosomes by cathepsin CTSG which degrades the major immunogenic MBP epitope and prevents the activation of MBP-specific autoreactive T cells. As to expression, found in both the central and the peripheral nervous system.

Its subcellular location is the myelin membrane. In terms of biological role, is, with PLP, the most abundant protein component of the myelin membrane in the CNS. Has a role in both the formation and stabilization of this compact multilayer arrangement of bilayers. Each splice variant and charge isomer may have a specialized function in the assembly of an optimized, biochemically functional myelin membrane. In Rattus norvegicus (Rat), this protein is Myelin basic protein (Mbp).